Here is a 431-residue protein sequence, read N- to C-terminus: Adenylosuccinate synthetase (431 aa).

GTP is bound by residues Gly-13–Lys-19 and Gly-41–Thr-43. The active-site Proton acceptor is Asp-14. The Mg(2+) site is built by Asp-14 and Gly-41. Residues Asp-14–Lys-17, Asn-39–His-42, Thr-130, Arg-144, Gln-225, Thr-240, and Arg-304 each bind IMP. His-42 serves as the catalytic Proton donor. Ser-300–Arg-306 is a substrate binding site. GTP-binding positions include Arg-306, Lys-332–Asp-334, and Ser-414–Gly-416.

Belongs to the adenylosuccinate synthetase family. As to quaternary structure, homodimer. Mg(2+) serves as cofactor.

It localises to the cytoplasm. It catalyses the reaction IMP + L-aspartate + GTP = N(6)-(1,2-dicarboxyethyl)-AMP + GDP + phosphate + 2 H(+). It functions in the pathway purine metabolism; AMP biosynthesis via de novo pathway; AMP from IMP: step 1/2. Its function is as follows. Plays an important role in the de novo pathway of purine nucleotide biosynthesis. Catalyzes the first committed step in the biosynthesis of AMP from IMP. In Bordetella petrii (strain ATCC BAA-461 / DSM 12804 / CCUG 43448), this protein is Adenylosuccinate synthetase.